A 205-amino-acid polypeptide reads, in one-letter code: Small ribosomal subunit protein uS4 (205 aa).

Positions 18 to 49 (NIWGRPKSPVNKREYGPGQHGQRRKGKLSDFG) are disordered. In terms of domain architecture, S4 RNA-binding spans 94–157 (RRLDAIVYRA…KQLALVLEAN (64 aa)).

Belongs to the universal ribosomal protein uS4 family. In terms of assembly, part of the 30S ribosomal subunit. Contacts protein S5. The interaction surface between S4 and S5 is involved in control of translational fidelity.

In terms of biological role, one of the primary rRNA binding proteins, it binds directly to 16S rRNA where it nucleates assembly of the body of the 30S subunit. With S5 and S12 plays an important role in translational accuracy. This Afipia carboxidovorans (strain ATCC 49405 / DSM 1227 / KCTC 32145 / OM5) (Oligotropha carboxidovorans) protein is Small ribosomal subunit protein uS4.